The primary structure comprises 70 residues: NAD(P)H-quinone oxidoreductase subunit O (70 aa).

This sequence belongs to the complex I NdhO subunit family. NDH-1 can be composed of about 15 different subunits; different subcomplexes with different compositions have been identified which probably have different functions.

It localises to the cellular thylakoid membrane. The catalysed reaction is a plastoquinone + NADH + (n+1) H(+)(in) = a plastoquinol + NAD(+) + n H(+)(out). It carries out the reaction a plastoquinone + NADPH + (n+1) H(+)(in) = a plastoquinol + NADP(+) + n H(+)(out). Functionally, NDH-1 shuttles electrons from an unknown electron donor, via FMN and iron-sulfur (Fe-S) centers, to quinones in the respiratory and/or the photosynthetic chain. The immediate electron acceptor for the enzyme in this species is believed to be plastoquinone. Couples the redox reaction to proton translocation, and thus conserves the redox energy in a proton gradient. Cyanobacterial NDH-1 also plays a role in inorganic carbon-concentration. The protein is NAD(P)H-quinone oxidoreductase subunit O of Nostoc sp. (strain PCC 7120 / SAG 25.82 / UTEX 2576).